Consider the following 243-residue polypeptide: Geranylgeranylglyceryl phosphate synthase (243 aa).

2 residues coordinate Mg(2+): Asp-29 and Ser-58. Sn-glycerol 1-phosphate-binding positions include 178–184, 209–210, and 231–232; these read YLEAGSG, GG, and GT.

Belongs to the GGGP/HepGP synthase family. Group II subfamily. As to quaternary structure, homodimer. Mg(2+) serves as cofactor.

The enzyme catalyses sn-glycerol 1-phosphate + (2E,6E,10E)-geranylgeranyl diphosphate = sn-3-O-(geranylgeranyl)glycerol 1-phosphate + diphosphate. Prenyltransferase that catalyzes the transfer of the geranylgeranyl moiety of geranylgeranyl diphosphate (GGPP) to the C3 hydroxyl of sn-glycerol-1-phosphate (G1P). The sequence is that of Geranylgeranylglyceryl phosphate synthase from Flavobacterium johnsoniae (strain ATCC 17061 / DSM 2064 / JCM 8514 / BCRC 14874 / CCUG 350202 / NBRC 14942 / NCIMB 11054 / UW101) (Cytophaga johnsonae).